The sequence spans 278 residues: Bifunctional protein FolD (278 aa).

NADP(+) contacts are provided by residues 165-167, Ser-190, and Thr-231; that span reads GRS.

This sequence belongs to the tetrahydrofolate dehydrogenase/cyclohydrolase family. As to quaternary structure, homodimer.

The enzyme catalyses (6R)-5,10-methylene-5,6,7,8-tetrahydrofolate + NADP(+) = (6R)-5,10-methenyltetrahydrofolate + NADPH. The catalysed reaction is (6R)-5,10-methenyltetrahydrofolate + H2O = (6R)-10-formyltetrahydrofolate + H(+). It functions in the pathway one-carbon metabolism; tetrahydrofolate interconversion. Functionally, catalyzes the oxidation of 5,10-methylenetetrahydrofolate to 5,10-methenyltetrahydrofolate and then the hydrolysis of 5,10-methenyltetrahydrofolate to 10-formyltetrahydrofolate. The sequence is that of Bifunctional protein FolD from Clostridium acetobutylicum (strain ATCC 824 / DSM 792 / JCM 1419 / IAM 19013 / LMG 5710 / NBRC 13948 / NRRL B-527 / VKM B-1787 / 2291 / W).